Consider the following 110-residue polypeptide: Large ribosomal subunit protein uL24 (110 aa).

It belongs to the universal ribosomal protein uL24 family. As to quaternary structure, part of the 50S ribosomal subunit.

Its function is as follows. One of two assembly initiator proteins, it binds directly to the 5'-end of the 23S rRNA, where it nucleates assembly of the 50S subunit. One of the proteins that surrounds the polypeptide exit tunnel on the outside of the subunit. This is Large ribosomal subunit protein uL24 from Caldicellulosiruptor saccharolyticus (strain ATCC 43494 / DSM 8903 / Tp8T 6331).